The following is a 633-amino-acid chain: MDYDYEKLGLKVGLEIHQQLNTKRKLFCNCPTKIRDDEPHGEIERFLRPSQSEMGQVDKAAILESRKEKKFIYQYYNDTTCLVELDDEPPHNVSEEGLNTALEVSTLMNMNFADEIHVMRKMVIDGSNTSGFQRTMFVSQDGFIETEYGKIRITSLCLEEDSCKKVEDGRDYTKYCVDRLGIPLLEITTEPDITSPKMGKEAARRIGTILRATGKVKRGLGTIRQDVNISIKNGARIEVKGVQNLDLIEKIIENEVTRQVSLNNLKEELIGRNAEVLDEIIDVTELLNDTESKVLRGALKNKGVIKAILLKGFSGLIGKEVQPGRRLGTEFSDRGKVLGGVGGLFHTDELPKYGITDEEVNKLKKFMNCGENDAVILVADAKNKAERALLAVIERAKESLIGIPEETRKALDDGNTSYLRPLPGAARMYPETDVPKILITSEICERIKNNLPEMPEEKTIRFIKEYELNEDLAKQMVMSYNVELFENLSKKYPNIKPTLIATTLEATLKEIKREGLDTEVLTDEHLNELFLGLSEDKMSKEAIPEVIKGYINNPNMKLDEVLDVAGLSKMSKEEVEAVILDIINQNILIVNEKGMGATGLLMGRCMAQLRGKADGKLINVTLQNKLKEKVQGQ.

It belongs to the GatB/GatE family. GatE subfamily. Heterodimer of GatD and GatE.

It catalyses the reaction L-glutamyl-tRNA(Gln) + L-glutamine + ATP + H2O = L-glutaminyl-tRNA(Gln) + L-glutamate + ADP + phosphate + H(+). In terms of biological role, allows the formation of correctly charged Gln-tRNA(Gln) through the transamidation of misacylated Glu-tRNA(Gln) in organisms which lack glutaminyl-tRNA synthetase. The reaction takes place in the presence of glutamine and ATP through an activated gamma-phospho-Glu-tRNA(Gln). The GatDE system is specific for glutamate and does not act on aspartate. The chain is Glutamyl-tRNA(Gln) amidotransferase subunit E from Methanococcus vannielii (strain ATCC 35089 / DSM 1224 / JCM 13029 / OCM 148 / SB).